Reading from the N-terminus, the 134-residue chain is Large ribosomal subunit protein bL20 (134 aa).

It belongs to the bacterial ribosomal protein bL20 family.

Binds directly to 23S ribosomal RNA and is necessary for the in vitro assembly process of the 50S ribosomal subunit. It is not involved in the protein synthesizing functions of that subunit. This is Large ribosomal subunit protein bL20 from Sinorhizobium fredii (strain NBRC 101917 / NGR234).